The primary structure comprises 256 residues: Tetraspanin-32 (256 aa).

Transmembrane regions (helical) follow at residues leucine 15 to isoleucine 35, alanine 61 to isoleucine 81, leucine 90 to phenylalanine 110, and cysteine 203 to isoleucine 223.

This sequence belongs to the tetraspanin (TM4SF) family. Expressed exclusively in hematopoietic tissues. Expression detected in spleen, thymus, bone marrow and peripheral blood leukocytes but not in heart, brain, lung, liver, kidney or testis.

The protein resides in the membrane. The polypeptide is Tetraspanin-32 (Tspan32) (Mus musculus (Mouse)).